A 530-amino-acid chain; its full sequence is Phosphoenolpyruvate carboxykinase (ATP) (530 aa).

Residues Arg-56, Tyr-196, and Lys-202 each contribute to the substrate site. ATP is bound by residues Lys-202, His-221, and Gly-237 to Thr-245. Lys-202 and His-221 together coordinate Mn(2+). Asp-258 contributes to the Mn(2+) binding site. ATP contacts are provided by residues Glu-286, Arg-322, Arg-438–Ile-439, and Thr-444. Arg-322 is a binding site for substrate.

It belongs to the phosphoenolpyruvate carboxykinase (ATP) family. In terms of assembly, monomer. The cofactor is Mn(2+).

It localises to the cytoplasm. The enzyme catalyses oxaloacetate + ATP = phosphoenolpyruvate + ADP + CO2. The protein operates within carbohydrate biosynthesis; gluconeogenesis. Functionally, involved in the gluconeogenesis. Catalyzes the conversion of oxaloacetate (OAA) to phosphoenolpyruvate (PEP) through direct phosphoryl transfer between the nucleoside triphosphate and OAA. The protein is Phosphoenolpyruvate carboxykinase (ATP) of Photobacterium profundum (strain SS9).